Consider the following 65-residue polypeptide: Sulfur carrier protein TtuB (65 aa).

G65 carries the post-translational modification 1-thioglycine; alternate. G65 carries the post-translational modification Glycyl adenylate; alternate. G65 is covalently cross-linked (Glycyl cysteine thioester (Gly-Cys) (interchain with C-192 in TtuC); alternate). A Glycyl lysine isopeptide (Gly-Lys) (interchain with K-? in acceptor proteins); alternate cross-link involves residue G65.

The protein belongs to the TtuB family. As to quaternary structure, is able to form a heterocomplex with TtuA. The C-terminal glycine residue of TtuB is first activated by TtuC as an acyl-adenylate (TtuB-COAMP), and then converted to the thiocarboxylate form (TtuB-COSH) by the cysteine desulfurases IscS or SufS.

Its pathway is tRNA modification. Functionally, required for the 2-thiolation of 5-methyluridine residue at position 54 in the T loop of tRNAs, leading to 5-methyl-2-thiouridine (m(5)s(2)U or s(2)T). This modification allows thermal stabilization of tRNAs in thermophilic microorganisms, and is essential for cell growth at high temperatures. Thiocarboxylated TtuB functions as the sulfur donor in the sulfurtransferase reaction catalyzed by TtuA. TtuB also functions as a protein modifier covalently attached to lysine residues of the target proteins TtuA and TtuC. TtuB conjugation might play a regulatory role to ensure appropriate sulfur transfer in cells. This chain is Sulfur carrier protein TtuB, found in Thermus thermophilus (strain ATCC BAA-163 / DSM 7039 / HB27).